The primary structure comprises 115 residues: Protachykinin-1 (115 aa).

Positions 1 to 19 (MKILVALAVLALVSTQLFA) are cleaved as a signal peptide. The propeptide occupies 20–56 (EDIRANDDLNYWSDWSDSDQIKEELPEPFEHLLQRIA). Methionine amide is present on residues Met68 and Met92.

Belongs to the tachykinin family. The substance P form is cleaved at Pro-59 by the prolyl endopeptidase FAP (seprase) activity (in vitro). Substance P is also cleaved and degraded by Angiotensin-converting enzyme (ACE) and neprilysin (MME).

Its subcellular location is the secreted. Tachykinins are active peptides which excite neurons, evoke behavioral responses, are potent vasodilators and secretagogues, and contract (directly or indirectly) many smooth muscles. The chain is Protachykinin-1 (TAC1) from Oryctolagus cuniculus (Rabbit).